The following is a 382-amino-acid chain: Lipid-A-disaccharide synthase (382 aa).

The protein belongs to the LpxB family.

It carries out the reaction 2-N,3-O-bis[(3R)-3-hydroxytetradecanoyl]-alpha-D-glucosaminyl 1-phosphate + UDP-2-N,3-O-bis[(3R)-3-hydroxytetradecanoyl]-alpha-D-glucosamine = lipid A disaccharide (E. coli) + UDP + H(+). It catalyses the reaction a lipid X + a UDP-2-N,3-O-bis[(3R)-3-hydroxyacyl]-alpha-D-glucosamine = a lipid A disaccharide + UDP + H(+). Its pathway is glycolipid biosynthesis; lipid IV(A) biosynthesis; lipid IV(A) from (3R)-3-hydroxytetradecanoyl-[acyl-carrier-protein] and UDP-N-acetyl-alpha-D-glucosamine: step 5/6. Functionally, condensation of UDP-2,3-diacylglucosamine and 2,3-diacylglucosamine-1-phosphate to form lipid A disaccharide, a precursor of lipid A, a phosphorylated glycolipid that anchors the lipopolysaccharide to the outer membrane of the cell. The sequence is that of Lipid-A-disaccharide synthase from Escherichia coli O157:H7.